The chain runs to 165 residues: uncharacterized protein (165 aa).

This is an uncharacterized protein from Escherichia coli (strain K12).